The following is a 204-amino-acid chain: Large ribosomal subunit protein uL22m (204 aa).

The N-terminal 38 residues, 1 to 38 (MAAVILERLGALWVQNLRGKLALGILPQSHIHTSASLE), are a transit peptide targeting the mitochondrion.

It belongs to the universal ribosomal protein uL22 family. In terms of assembly, component of the mitochondrial ribosome large subunit (39S) which comprises a 16S rRNA and about 50 distinct proteins.

It is found in the mitochondrion. The chain is Large ribosomal subunit protein uL22m (MRPL22) from Bos taurus (Bovine).